A 225-amino-acid chain; its full sequence is Urease accessory protein UreF (225 aa).

It belongs to the UreF family. UreD, UreF and UreG form a complex that acts as a GTP-hydrolysis-dependent molecular chaperone, activating the urease apoprotein by helping to assemble the nickel containing metallocenter of UreC. The UreE protein probably delivers the nickel.

The protein resides in the cytoplasm. In terms of biological role, required for maturation of urease via the functional incorporation of the urease nickel metallocenter. The sequence is that of Urease accessory protein UreF from Thermosynechococcus vestitus (strain NIES-2133 / IAM M-273 / BP-1).